The sequence spans 673 residues: tRNA uridine 5-carboxymethylaminomethyl modification enzyme MnmG (673 aa).

Glycine 17–glycine 22 is a binding site for FAD. Glycine 284–phenylalanine 298 is a binding site for NAD(+).

It belongs to the MnmG family. As to quaternary structure, homodimer. Heterotetramer of two MnmE and two MnmG subunits. FAD serves as cofactor.

The protein resides in the cytoplasm. Functionally, NAD-binding protein involved in the addition of a carboxymethylaminomethyl (cmnm) group at the wobble position (U34) of certain tRNAs, forming tRNA-cmnm(5)s(2)U34. The protein is tRNA uridine 5-carboxymethylaminomethyl modification enzyme MnmG of Polaromonas sp. (strain JS666 / ATCC BAA-500).